We begin with the raw amino-acid sequence, 472 residues long: Adenosylhomocysteinase (472 aa).

Substrate is bound by residues T64, D138, and E198. 199-201 (TTT) lines the NAD(+) pocket. The substrate site is built by K228 and D232. Residues N233, 262-267 (GFGDVG), E285, N320, 341-343 (IGH), and N386 contribute to the NAD(+) site.

The protein belongs to the adenosylhomocysteinase family. It depends on NAD(+) as a cofactor.

The protein localises to the cytoplasm. The catalysed reaction is S-adenosyl-L-homocysteine + H2O = L-homocysteine + adenosine. It participates in amino-acid biosynthesis; L-homocysteine biosynthesis; L-homocysteine from S-adenosyl-L-homocysteine: step 1/1. Functionally, may play a key role in the regulation of the intracellular concentration of adenosylhomocysteine. This Prochlorococcus marinus (strain MIT 9301) protein is Adenosylhomocysteinase.